The sequence spans 359 residues: Dihydroorotate dehydrogenase (quinone) (359 aa).

FMN is bound by residues 68–72 (AGFDK) and Ala92. Lys72 is a substrate binding site. 117-121 (NAYGF) serves as a coordination point for substrate. 2 residues coordinate FMN: Asn146 and Asn179. Residue Asn179 participates in substrate binding. Ser182 (nucleophile) is an active-site residue. Asn184 contributes to the substrate binding site. Residues Lys215 and Thr243 each contribute to the FMN site. Position 244 to 245 (244 to 245 (NT)) interacts with substrate. FMN is bound by residues Gly263, Gly292, and 313-314 (YT).

Belongs to the dihydroorotate dehydrogenase family. Type 2 subfamily. As to quaternary structure, monomer. FMN serves as cofactor.

It is found in the cell membrane. It carries out the reaction (S)-dihydroorotate + a quinone = orotate + a quinol. It functions in the pathway pyrimidine metabolism; UMP biosynthesis via de novo pathway; orotate from (S)-dihydroorotate (quinone route): step 1/1. Its function is as follows. Catalyzes the conversion of dihydroorotate to orotate with quinone as electron acceptor. This is Dihydroorotate dehydrogenase (quinone) from Nautilia profundicola (strain ATCC BAA-1463 / DSM 18972 / AmH).